A 36-amino-acid chain; its full sequence is MEVNILGLIATALFIIIPTSFLLILYVQTASQGSKS.

The chain crosses the membrane as a helical span at residues 5–25 (ILGLIATALFIIIPTSFLLIL).

It belongs to the PsbM family. In terms of assembly, PSII is composed of 1 copy each of membrane proteins PsbA, PsbB, PsbC, PsbD, PsbE, PsbF, PsbH, PsbI, PsbJ, PsbK, PsbL, PsbM, PsbT, PsbX, PsbY, PsbZ, Psb30/Ycf12, at least 3 peripheral proteins of the oxygen-evolving complex and a large number of cofactors. It forms dimeric complexes.

Its subcellular location is the plastid. The protein resides in the chloroplast thylakoid membrane. One of the components of the core complex of photosystem II (PSII). PSII is a light-driven water:plastoquinone oxidoreductase that uses light energy to abstract electrons from H(2)O, generating O(2) and a proton gradient subsequently used for ATP formation. It consists of a core antenna complex that captures photons, and an electron transfer chain that converts photonic excitation into a charge separation. This subunit is found at the monomer-monomer interface. The chain is Photosystem II reaction center protein M from Chlorokybus atmophyticus (Soil alga).